Reading from the N-terminus, the 396-residue chain is Elongation factor Tu 2 (396 aa).

A tr-type G domain is found at 10 to 206 (KPHVNVGTIG…ALDTYIPTPK (197 aa)). The segment at 19 to 26 (GHVDHGKT) is G1. 19-26 (GHVDHGKT) contacts GTP. Threonine 26 contributes to the Mg(2+) binding site. A G2 region spans residues 60–64 (GITIS). The tract at residues 81–84 (DCPG) is G3. Residues 81 to 85 (DCPGH) and 136 to 139 (NKAD) each bind GTP. The G4 stretch occupies residues 136–139 (NKAD). Residues 174–176 (SAL) are G5.

Belongs to the TRAFAC class translation factor GTPase superfamily. Classic translation factor GTPase family. EF-Tu/EF-1A subfamily. Monomer.

Its subcellular location is the cytoplasm. It carries out the reaction GTP + H2O = GDP + phosphate + H(+). Its function is as follows. GTP hydrolase that promotes the GTP-dependent binding of aminoacyl-tRNA to the A-site of ribosomes during protein biosynthesis. In Ruthia magnifica subsp. Calyptogena magnifica, this protein is Elongation factor Tu 2.